The chain runs to 336 residues: Casein kinase II subunit alpha (336 aa).

The Protein kinase domain maps to Tyr32–Phe317. Residues Ile38–Val46 and Lys61 each bind ATP. The Proton acceptor role is filled by Asp149.

It belongs to the protein kinase superfamily. Ser/Thr protein kinase family. CK2 subfamily. In terms of assembly, tetramer composed of two alpha chains, one beta chain and one beta' chain.

The enzyme catalyses L-seryl-[protein] + ATP = O-phospho-L-seryl-[protein] + ADP + H(+). It carries out the reaction L-threonyl-[protein] + ATP = O-phospho-L-threonyl-[protein] + ADP + H(+). Functionally, catalytic subunit of a constitutively active serine/threonine-protein kinase complex that phosphorylates a large number of substrates containing acidic residues C-terminal to the phosphorylated serine or threonine. Phosphorylates the frq clock protein thus regulating the circadian clock. In Neurospora crassa (strain ATCC 24698 / 74-OR23-1A / CBS 708.71 / DSM 1257 / FGSC 987), this protein is Casein kinase II subunit alpha (cka).